Reading from the N-terminus, the 350-residue chain is Ceramide synthase 1 (350 aa).

A2 carries the N-acetylalanine modification. The next 6 helical transmembrane spans lie at 53–73 (AHLAAPELLLAVLCALGWTAL), 103–123 (AWKLLFYLACWSYCAYLLLGT), 148–168 (IAVAYLLQGSFYCHSIYATVY), 176–196 (SVVMLVHHVVTLLLIASSYAF), 239–259 (VANLGCLSFCFCWFWFRLYWF), and 287–307 (LLLLLMVMNIYWFLYIVAFAA). A TLC domain is found at 97 to 311 (ARLPESAWKL…IVAFAAKVLT (215 aa)).

In terms of processing, acetylated. Deacetylation by SIRT3 increases enzyme activity and promotes mitochondrial ceramide accumulation. Expressed in brain, skeletal muscle, heart and perigonadal white adipose tissue.

The protein localises to the endoplasmic reticulum membrane. It catalyses the reaction a sphingoid base + octadecanoyl-CoA = an N-octadecanoyl-sphingoid base + CoA + H(+). The catalysed reaction is sphinganine + octadecanoyl-CoA = N-(octadecanoyl)-sphinganine + CoA + H(+). The enzyme catalyses hexadecasphinganine + octadecanoyl-CoA = N-octadecanoylhexadecasphinganine + CoA + H(+). It carries out the reaction sphing-4-enine + octadecanoyl-CoA = N-octadecanoylsphing-4-enine + CoA + H(+). It catalyses the reaction heptadecasphing-4-enine + octadecanoyl-CoA = N-octadecanoyl-heptadecasphing-4-enine + CoA + H(+). The catalysed reaction is 2-hydroxyoctadecanoyl-CoA + sphinganine = N-(2-hydroxyoctadecanoyl)-sphinganine + CoA + H(+). The enzyme catalyses eicosanoyl-CoA + sphinganine = N-eicosanoylsphinganine + CoA + H(+). It functions in the pathway lipid metabolism; sphingolipid metabolism. Inhibited by fumonisin B1. Its function is as follows. Ceramide synthase that catalyzes the transfer of the acyl chain from acyl-CoA to a sphingoid base, with high selectivity toward stearoyl-CoA (octadecanoyl-CoA; C18:0-CoA). N-acylates sphinganine and sphingosine bases to form dihydroceramides and ceramides in de novo synthesis and salvage pathways, respectively. Plays a predominant role in skeletal muscle in regulating C18 ceramide and dihydroceramide levels with an impact on whole-body glucose metabolism and insulin sensitivity. Protects from diet-induced obesity by suppressing the uptake of glucose in multiple organs in a FGF21-dependent way. Generates C18 ceramides in the brain, playing a critical role in cerebellar development and Purkinje cell function. In response to cellular stress mediates mitophagy, a known defense mechanism against cell transformation and aging. Upon mitochondria fission, generates C18 ceramides that anchor lipidated MAP1LC3B/LC3B-II autophagolysosomes to outer mitochondrial membranes to eliminate damaged mitochondria. This is Ceramide synthase 1 from Mus musculus (Mouse).